The following is a 376-amino-acid chain: Homoserine dehydrogenase (376 aa).

NADP(+)-binding residues include Asn17 and Ile18. Ile18 is an NAD(+) binding site. Ile18, Lys67, Thr99, and Lys123 together coordinate NADPH. NADP(+) contacts are provided by Thr99 and Lys123. Thr99 is a binding site for NAD(+). Glu150, Val153, Ala155, and Leu157 together coordinate Na(+). At Ser201 the chain carries Phosphoserine. Residues Gly213 and Glu216 each contribute to the NADP(+) site. 2 residues coordinate L-homoserine: Glu216 and Asp227. The active-site Proton donor is Lys231. Gly349 is an NADP(+) binding site. Gly349 is an NAD(+) binding site. Gly349 contributes to the NADPH binding site.

Belongs to the homoserine dehydrogenase family. Requires a metal cation as cofactor.

It carries out the reaction L-homoserine + NADP(+) = L-aspartate 4-semialdehyde + NADPH + H(+). It catalyses the reaction L-homoserine + NAD(+) = L-aspartate 4-semialdehyde + NADH + H(+). The protein operates within amino-acid biosynthesis; L-methionine biosynthesis via de novo pathway; L-homoserine from L-aspartate: step 3/3. Its pathway is amino-acid biosynthesis; L-threonine biosynthesis; L-threonine from L-aspartate: step 3/5. Its function is as follows. Catalyzes the conversion of L-aspartate-beta-semialdehyde (L-Asa) to L-homoserine (L-Hse), the third step in the biosynthesis of amino acids that derive from aspartate (the aspartate family of amino acids), including methioinine and threonine, the latter of which is a precursor to isoleucine; production of homoserine leads to a branch-point in the pathway as it can either be O-phosphorylated for processing to threonine, or O-acylated for processing to methionine. In Schizosaccharomyces pombe (strain 972 / ATCC 24843) (Fission yeast), this protein is Homoserine dehydrogenase.